A 234-amino-acid polypeptide reads, in one-letter code: Opacity protein V28 (234 aa).

A signal peptide is located at residue Ala-1.

The protein belongs to the opacity porin family.

It is found in the cell outer membrane. Implicated in a number of adherence functions. OPA proteins are implicated in pathogenesis and are subject to phase variation. The protein is Opacity protein V28 of Neisseria gonorrhoeae.